The chain runs to 380 residues: Cytochrome b (380 aa).

Helical transmembrane passes span 33 to 53 (FGSLLGACLIIQTITGLFLAM), 77 to 98 (WMIRHLHANGASMLFICLFLHI), 113 to 133 (WNIGIILLFMTMMTAFMGYVL), and 178 to 198 (FFTLHFMLPFIITALTTLHLL). The heme b site is built by His-83 and His-97. The heme b site is built by His-182 and His-196. An a ubiquinone-binding site is contributed by His-201. The next 4 helical transmembrane spans lie at 226–246 (IKDILGLLLFLLALMTLTLLS), 288–308 (LGGVMALMLSILILTTIPALH), 320–340 (LSQFLYWLLITDLLVLTWIGG), and 347–367 (FITIGQVASVLYFTTILLLMP).

This sequence belongs to the cytochrome b family. As to quaternary structure, the cytochrome bc1 complex contains 11 subunits: 3 respiratory subunits (MT-CYB, CYC1 and UQCRFS1), 2 core proteins (UQCRC1 and UQCRC2) and 6 low-molecular weight proteins (UQCRH/QCR6, UQCRB/QCR7, UQCRQ/QCR8, UQCR10/QCR9, UQCR11/QCR10 and a cleavage product of UQCRFS1). This cytochrome bc1 complex then forms a dimer. The cofactor is heme b.

The protein resides in the mitochondrion inner membrane. Its function is as follows. Component of the ubiquinol-cytochrome c reductase complex (complex III or cytochrome b-c1 complex) that is part of the mitochondrial respiratory chain. The b-c1 complex mediates electron transfer from ubiquinol to cytochrome c. Contributes to the generation of a proton gradient across the mitochondrial membrane that is then used for ATP synthesis. This chain is Cytochrome b (MT-CYB), found in Pongo pygmaeus (Bornean orangutan).